Reading from the N-terminus, the 157-residue chain is S-ribosylhomocysteine lyase (157 aa).

Residues H54, H58, and C124 each contribute to the Fe cation site.

Belongs to the LuxS family. As to quaternary structure, homodimer. The cofactor is Fe cation.

It catalyses the reaction S-(5-deoxy-D-ribos-5-yl)-L-homocysteine = (S)-4,5-dihydroxypentane-2,3-dione + L-homocysteine. Functionally, involved in the synthesis of autoinducer 2 (AI-2) which is secreted by bacteria and is used to communicate both the cell density and the metabolic potential of the environment. The regulation of gene expression in response to changes in cell density is called quorum sensing. Catalyzes the transformation of S-ribosylhomocysteine (RHC) to homocysteine (HC) and 4,5-dihydroxy-2,3-pentadione (DPD). This Oenococcus oeni (strain ATCC BAA-331 / PSU-1) protein is S-ribosylhomocysteine lyase.